The primary structure comprises 172 residues: C-phycocyanin beta subunit (172 aa).

Asn-72 bears the N4-methylasparagine mark. Residues Cys-82 and Cys-153 each coordinate (2R,3E)-phycocyanobilin.

This sequence belongs to the phycobiliprotein family. Heterodimer of an alpha and a beta subunit, which further assembles into trimers and the trimers into hexamers. Post-translationally, contains two covalently linked bilin chromophores.

The protein localises to the cellular thylakoid membrane. In terms of biological role, light-harvesting photosynthetic bile pigment-protein from the phycobiliprotein complex (phycobilisome, PBS). Phycocyanin is the major phycobiliprotein in the PBS rod. This Synechocystis sp. (strain PCC 6701) protein is C-phycocyanin beta subunit (cpcB).